The sequence spans 302 residues: Galactofuranosyltransferase GlfT1 (302 aa).

Belongs to the glycosyltransferase 2 family.

The protein localises to the cell membrane. The protein resides in the secreted. Its subcellular location is the cell wall. It catalyses the reaction alpha-L-rhamnosyl-(1-&gt;3)-N-acetyl-alpha-D-glucosaminyl-diphospho-trans,octa-cis-decaprenol + 2 UDP-alpha-D-galactofuranose = beta-D-galactofuranosyl-(1-&gt;5)-beta-D-galactofuranosyl-(1-&gt;4)-alpha-L-rhamnosyl-(1-&gt;3)-N-acetyl-alpha-D-glucosaminyl-diphospho-trans,octa-cis-decaprenol + 2 UDP + 2 H(+). It participates in cell wall biogenesis; cell wall polysaccharide biosynthesis. Functionally, involved in the biosynthesis of the arabinogalactan (AG) region of the mycolylarabinogalactan-peptidoglycan (mAGP) complex, an essential component of the mycobacterial cell wall. Catalyzes the transfer of the first two galactofuranosyl (Galf) units from UDP-galactofuranose (UDP-Galf) onto the rhamnosyl-GlcNAc-diphospho-decaprenol (Rha-GlcNAc-PP-C50) acceptor, yielding galactofuranosyl-galactofuranosyl-rhamnosyl-GlcNAc-diphospho-decaprenol (Galf-Galf-Rha-GlcNAc-PP-C50). Thus, GlfT1 is the initiator of galactan synthesis, while GlfT2 continues with the subsequent polymerization events. The polypeptide is Galactofuranosyltransferase GlfT1 (Mycolicibacterium smegmatis (strain ATCC 700084 / mc(2)155) (Mycobacterium smegmatis)).